Consider the following 114-residue polypeptide: PDZK1-interacting protein 1 (114 aa).

Residues Met-1–Gln-28 lie on the Extracellular side of the membrane. A helical membrane pass occupies residues Pro-29–Asn-51. The Cytoplasmic portion of the chain corresponds to His-52–Met-114. Ser-85 carries the phosphoserine modification. The interval Ser-92–Met-114 is disordered. The span at Glu-105–Met-114 shows a compositional bias: basic and acidic residues.

It belongs to the PDZK1-interacting protein 1/SMIM24 family. As to quaternary structure, forms a heterodimer (via N-terminal transmembrane helix) with SLC5A2/SGLT2 (via TM13); this interaction enhances SLC5A2 transporter activity. Interacts with PDZK1.

Its subcellular location is the apical cell membrane. Auxiliary protein of electrogenic Na(+)-coupled sugar symporter SLC5A2/SGLT2 and SLC5A1/SGLT1. Essential for the transporter activity of SLC5A2/SGLT2 but not SLC5A1/SGLT1. This Sus scrofa (Pig) protein is PDZK1-interacting protein 1.